A 407-amino-acid polypeptide reads, in one-letter code: Ribonuclease Z (407 aa).

A ribonuclease Z region spans residues 1-308; that stretch reads MEITFLGTSS…QDFLHYAIPR (308 aa). Zn(2+) is bound by residues histidine 62, histidine 64, aspartate 66, histidine 67, histidine 139, aspartate 210, and histidine 268. The Proton acceptor role is filled by aspartate 66. A unknown region spans residues 309–407; it reads DGQICAEMPP…VDWSALNVLF (99 aa).

This sequence belongs to the RNase Z family. Homodimer. Zn(2+) serves as cofactor.

The enzyme catalyses Endonucleolytic cleavage of RNA, removing extra 3' nucleotides from tRNA precursor, generating 3' termini of tRNAs. A 3'-hydroxy group is left at the tRNA terminus and a 5'-phosphoryl group is left at the trailer molecule.. Zinc phosphodiesterase, which displays some tRNA 3'-processing endonuclease activity. Probably involved in tRNA maturation, by removing a 3'-trailer from precursor tRNA. In Thermosynechococcus vestitus (strain NIES-2133 / IAM M-273 / BP-1), this protein is Ribonuclease Z (rnz).